The following is a 95-amino-acid chain: ESAT-6-like protein EsxA (95 aa).

The protein belongs to the WXG100 family. ESAT-6 subfamily. Forms a tight 1:1 complex with EsxB.

The chain is ESAT-6-like protein EsxA from Corynebacterium diphtheriae (strain ATCC 700971 / NCTC 13129 / Biotype gravis).